Reading from the N-terminus, the 545-residue chain is Probable zinc metalloprotease EGY2, chloroplastic (545 aa).

The transit peptide at 1-63 (MQLPAMSCSP…QIRNRRFVCQ (63 aa)) directs the protein to the chloroplast. A disordered region spans residues 66–142 (TETEPDGDGN…DATPASDAQE (77 aa)). A compositionally biased stretch (acidic residues) spans 68 to 85 (TEPDGDGNGDEEKEELGD). 2 stretches are compositionally biased toward polar residues: residues 88–109 (SSPS…TNAD) and 117–129 (NTEP…TVQN). 7 consecutive transmembrane segments (helical) span residues 256–276 (AVPE…TLLL), 300–320 (VYGA…HILA), 325–345 (GIKL…FGAI), 363–383 (AAGP…GFIL), 426–446 (PLVL…IPAG), 473–493 (LLGI…LIFF), and 513–533 (YISI…PYPF).

This sequence belongs to the peptidase M50B family.

It localises to the plastid. The protein localises to the chloroplast membrane. Probable membrane-associated metalloprotease that may be involved in chloroplast development. This chain is Probable zinc metalloprotease EGY2, chloroplastic (EGY2), found in Oryza sativa subsp. indica (Rice).